Here is a 101-residue protein sequence, read N- to C-terminus: Small ribosomal subunit protein bS18c (101 aa).

Belongs to the bacterial ribosomal protein bS18 family. Part of the 30S ribosomal subunit.

It localises to the plastid. It is found in the chloroplast. The polypeptide is Small ribosomal subunit protein bS18c (Panax ginseng (Korean ginseng)).